The primary structure comprises 76 residues: uncharacterized protein (76 aa).

The next 2 membrane-spanning stretches (helical) occupy residues F16–L33 and T45–A61.

It is found in the cell membrane. This is an uncharacterized protein from Bacillus subtilis (strain 168).